The primary structure comprises 695 residues: Parasporal crystal protein Cry18Ca (695 aa).

Belongs to the delta endotoxin family.

Functionally, binds to the brush border membrane vesicles of scarab larvae and damages the gut wall somehow to allow the vegetative cells of P.popilliae to enter the hemolymph. The sequence is that of Parasporal crystal protein Cry18Ca (cry18Ca) from Paenibacillus popilliae (Bacillus popilliae).